The following is a 158-amino-acid chain: Transcription elongation factor GreA (158 aa).

Residues glutamine 4–histidine 70 are a coiled coil.

Belongs to the GreA/GreB family.

Its function is as follows. Necessary for efficient RNA polymerase transcription elongation past template-encoded arresting sites. The arresting sites in DNA have the property of trapping a certain fraction of elongating RNA polymerases that pass through, resulting in locked ternary complexes. Cleavage of the nascent transcript by cleavage factors such as GreA or GreB allows the resumption of elongation from the new 3'terminus. GreA releases sequences of 2 to 3 nucleotides. This Staphylococcus aureus (strain Mu3 / ATCC 700698) protein is Transcription elongation factor GreA.